Here is a 90-residue protein sequence, read N- to C-terminus: MDPTVLADAVARMAEFGRHVEELVAEIESLVTRLHVTWTGEGAAAHAEAQRHWAAGEAMMRQALAQLTAAGQSAHANYTGAMATNLGMWS.

It belongs to the WXG100 family. ESAT-6 subfamily.

The protein localises to the secreted. The chain is ESAT-6-like protein EsxE from Mycobacterium tuberculosis (strain CDC 1551 / Oshkosh).